The primary structure comprises 312 residues: Acetyl-coenzyme A carboxylase carboxyl transferase subunit beta (312 aa).

Positions 24–293 (LWIKCPDSGQ…VEHAKPAPQL (270 aa)) constitute a CoA carboxyltransferase N-terminal domain. Positions 286–312 (HAKPAPQLPPPAKPAETAEAPAVATSA) are disordered. The span at 299-312 (PAETAEAPAVATSA) shows a compositional bias: low complexity.

The protein belongs to the AccD/PCCB family. Acetyl-CoA carboxylase is a heterohexamer composed of biotin carboxyl carrier protein (AccB), biotin carboxylase (AccC) and two subunits each of ACCase subunit alpha (AccA) and ACCase subunit beta (AccD).

Its subcellular location is the cytoplasm. It catalyses the reaction N(6)-carboxybiotinyl-L-lysyl-[protein] + acetyl-CoA = N(6)-biotinyl-L-lysyl-[protein] + malonyl-CoA. It participates in lipid metabolism; malonyl-CoA biosynthesis; malonyl-CoA from acetyl-CoA: step 1/1. Its function is as follows. Component of the acetyl coenzyme A carboxylase (ACC) complex. Biotin carboxylase (BC) catalyzes the carboxylation of biotin on its carrier protein (BCCP) and then the CO(2) group is transferred by the transcarboxylase to acetyl-CoA to form malonyl-CoA. This Bradyrhizobium sp. (strain ORS 278) protein is Acetyl-coenzyme A carboxylase carboxyl transferase subunit beta.